The following is a 530-amino-acid chain: uncharacterized protein (530 aa).

The tract at residues 362 to 408 (NLTPKLNKTNEDIKSDSTSQPQGFPEGNRRVMENPETKVSKTDDEEM) is disordered. Residues 388-403 (GNRRVMENPETKVSKT) show a composition bias toward basic and acidic residues.

It belongs to the IIV-6 030L family.

This is an uncharacterized protein from Invertebrate iridescent virus 6 (IIV-6).